Consider the following 362-residue polypeptide: 1-aminocyclopropane-1-carboxylate oxidase homolog 10 (362 aa).

The Fe2OG dioxygenase domain maps to 211 to 310; sequence KGLFMLCHYY…RISVACFFSS (100 aa). The Fe cation site is built by histidine 235, aspartate 237, and histidine 291. Arginine 301 is a binding site for 2-oxoglutarate.

Belongs to the iron/ascorbate-dependent oxidoreductase family. Fe(2+) is required as a cofactor.

This Arabidopsis thaliana (Mouse-ear cress) protein is 1-aminocyclopropane-1-carboxylate oxidase homolog 10.